Reading from the N-terminus, the 222-residue chain is TPR repeat-containing protein BH2049 (222 aa).

2 TPR repeats span residues 34 to 67 (AEPLFHLGNIHYAYGHKASAMNYWKEAVSKNREH) and 169 to 202 (PVGLKILGISSIRTNQYEAGLTFLEKSLELKEDK).

In Halalkalibacterium halodurans (strain ATCC BAA-125 / DSM 18197 / FERM 7344 / JCM 9153 / C-125) (Bacillus halodurans), this protein is TPR repeat-containing protein BH2049.